Reading from the N-terminus, the 569-residue chain is CTP synthase (569 aa).

The segment at 1 to 276 (MNQATPTKHV…DAYLVRRLDL (276 aa)) is amidoligase domain. S18 serves as a coordination point for CTP. S18 lines the UTP pocket. ATP is bound by residues 19–24 (SLGKGL) and D76. D76 and E150 together coordinate Mg(2+). Residues 157 to 159 (DIE), 197 to 202 (KTKPTQ), and K233 each bind CTP. UTP-binding positions include 197-202 (KTKPTQ) and K233. The 250-residue stretch at 301–550 (TVALVGKYVD…VGAAIERQRE (250 aa)) folds into the Glutamine amidotransferase type-1 domain. Position 364 (G364) interacts with L-glutamine. C391 functions as the Nucleophile; for glutamine hydrolysis in the catalytic mechanism. Residues 392 to 395 (LGLQ), E415, and R476 each bind L-glutamine. Catalysis depends on residues H523 and E525.

This sequence belongs to the CTP synthase family. As to quaternary structure, homotetramer.

The catalysed reaction is UTP + L-glutamine + ATP + H2O = CTP + L-glutamate + ADP + phosphate + 2 H(+). It carries out the reaction L-glutamine + H2O = L-glutamate + NH4(+). The enzyme catalyses UTP + NH4(+) + ATP = CTP + ADP + phosphate + 2 H(+). The protein operates within pyrimidine metabolism; CTP biosynthesis via de novo pathway; CTP from UDP: step 2/2. Its activity is regulated as follows. Allosterically activated by GTP, when glutamine is the substrate; GTP has no effect on the reaction when ammonia is the substrate. The allosteric effector GTP functions by stabilizing the protein conformation that binds the tetrahedral intermediate(s) formed during glutamine hydrolysis. Inhibited by the product CTP, via allosteric rather than competitive inhibition. In terms of biological role, catalyzes the ATP-dependent amination of UTP to CTP with either L-glutamine or ammonia as the source of nitrogen. Regulates intracellular CTP levels through interactions with the four ribonucleotide triphosphates. The protein is CTP synthase of Nocardioides sp. (strain ATCC BAA-499 / JS614).